A 190-amino-acid chain; its full sequence is ADP-ribosylation factor-like protein 6 (190 aa).

A lipid anchor (N-myristoyl glycine) is attached at Gly-2. GTP-binding positions include 24-31, Thr-50, 69-73, Gly-72, 130-133, and Ala-164; these read GLDNSGKT, DMAGQ, and NKMD. Mg(2+)-binding residues include Thr-31 and Thr-50.

It belongs to the small GTPase superfamily. Arf family.

It is found in the cytoplasm. The polypeptide is ADP-ribosylation factor-like protein 6 (Caenorhabditis briggsae).